Consider the following 316-residue polypeptide: Taste receptor type 2 member 109 (316 aa).

The Extracellular portion of the chain corresponds to Met-1–Asn-14. Residues Ile-15–Ala-35 traverse the membrane as a helical segment. At Leu-36–Arg-62 the chain is on the cytoplasmic side. The chain crosses the membrane as a helical span at residues Ile-63–Val-83. The Extracellular segment spans residues Thr-84 to Thr-94. The helical transmembrane segment at Leu-95–Phe-115 threads the bilayer. The Cytoplasmic segment spans residues Leu-116–Lys-135. The chain crosses the membrane as a helical span at residues Val-136 to Asn-156. The Extracellular portion of the chain corresponds to Leu-157–His-191. Asn-170 carries an N-linked (GlcNAc...) asparagine glycan. The helical transmembrane segment at Ile-192–Ser-212 threads the bilayer. The Cytoplasmic portion of the chain corresponds to Leu-213–Ala-241. Residues Val-242 to Ile-262 traverse the membrane as a helical segment. Over His-263–Pro-270 the chain is Extracellular. Residues Phe-271–Ile-291 form a helical membrane-spanning segment. The Cytoplasmic portion of the chain corresponds to Leu-292–Lys-316.

Belongs to the G-protein coupled receptor T2R family.

Its subcellular location is the membrane. In terms of biological role, putative taste receptor which may play a role in the perception of bitterness. The polypeptide is Taste receptor type 2 member 109 (Mus musculus (Mouse)).